A 299-amino-acid chain; its full sequence is CMRF35-like molecule 8 (299 aa).

An N-terminal signal peptide occupies residues 1-17 (MWLPWALLLLWVPGCFA). Residues 18–180 (LSKCRTVAGP…TEEVVNSQLP (163 aa)) lie on the Extracellular side of the membrane. The Ig-like V-type domain occupies 19 to 123 (SKCRTVAGPV…HDPVVEVEVS (105 aa)). C36 and C103 are oxidised to a cystine. 2 N-linked (GlcNAc...) asparagine glycosylation sites follow: N83 and N92. Residues 181 to 201 (LLLSLLALLLLLLVGASLLAW) traverse the membrane as a helical segment. Topologically, residues 202–299 (RMFQKWIKAG…DSDYSVIRKT (98 aa)) are cytoplasmic. Positions 278–299 (RIAAQRPREEEPDSDYSVIRKT) are disordered. Phosphotyrosine is present on Y293.

This sequence belongs to the CD300 family. In terms of assembly, upon tyrosine-phosphorylation, interacts with PTN6/SHP-1 and PTPN11/SHP-2 and INPP5D. Phosphorylated on tyrosine. In terms of processing, N-glycosylated. As to expression, expressed not only by natural killer (NK) cells but also by T-cell subsets, B-cells, dendritic cells, mast cells, granulocytes and monocytes.

The protein localises to the cell membrane. In terms of biological role, inhibitory receptor which may contribute to the down-regulation of cytolytic activity in natural killer (NK) cells, and to the down-regulation of mast cell degranulation. Negatively regulates the Toll-like receptor (TLR) signaling mediated by MYD88 but not TRIF through activation of PTPN6. In Homo sapiens (Human), this protein is CMRF35-like molecule 8 (CD300A).